The chain runs to 375 residues: MKLSDFDFNVPNALIAQYPSSERDNSDLLIAGTKHIKTKFYNIIDYLKEGDLLVFNNSKVIKAKLHLGKNITINLNKKLSDNCWGAFAKPARKLNIGDEFYFDTHKIIITEKLAMGEIKVKFILNNISMIKFLDKYGEMPLPFYIKRTSSVCCSNMALFCDHDNTLKITSISHNSNTVNFRSTDSMIDSTNDNDRYQTIYSQIEGSVAAPTAGLHFTKDILDKLKTKGINTAFVTLHVGAGTFLPVKTENIHKHKMHTEYCSITAETAEIINKTKQKGRDIIAVGTTTLRTLESSCNNGIVKAGNFETDIFITPGFNFQIVDMLLTNFHFPKSTLFILICAFAGFKEMHALYKYAIKEKMRFFSYGDATLLYRKV.

It belongs to the QueA family. In terms of assembly, monomer.

Its subcellular location is the cytoplasm. It catalyses the reaction 7-aminomethyl-7-carbaguanosine(34) in tRNA + S-adenosyl-L-methionine = epoxyqueuosine(34) in tRNA + adenine + L-methionine + 2 H(+). The protein operates within tRNA modification; tRNA-queuosine biosynthesis. Its function is as follows. Transfers and isomerizes the ribose moiety from AdoMet to the 7-aminomethyl group of 7-deazaguanine (preQ1-tRNA) to give epoxyqueuosine (oQ-tRNA). The sequence is that of S-adenosylmethionine:tRNA ribosyltransferase-isomerase from Rickettsia typhi (strain ATCC VR-144 / Wilmington).